The primary structure comprises 282 residues: MGLEKTVKEKLSFEGVGIHTGEYSKLIIHPEKEGTGIRFFKNGVYIPARHEFVVHTNHSTDLGFKGQRIKTVEHILSVLHLLEITNVTIEVIGNEIPILDGSGWEFYEAIRKNILNQNREIDYFVVEEPIIVEDEGRLIKAEPSDTLEVTYEGEFKNFLGRQKFTFVEGNEEEIVLARTFCFDWEIEHIKKVGLGKGGSLKNTLVLGKDKVYNPEGLRYENEPVRHKVFDLIGDLYLLGSPVKGKFYSFRGGHSLNVKLVKELAKKQKLTRDLPHLPSVQAL.

Residues H74, H226, and D230 each contribute to the Zn(2+) site. The active-site Proton donor is the H253.

Belongs to the LpxC family. Zn(2+) serves as cofactor.

It carries out the reaction a UDP-3-O-[(3R)-3-hydroxyacyl]-N-acetyl-alpha-D-glucosamine + H2O = a UDP-3-O-[(3R)-3-hydroxyacyl]-alpha-D-glucosamine + acetate. It functions in the pathway glycolipid biosynthesis; lipid IV(A) biosynthesis; lipid IV(A) from (3R)-3-hydroxytetradecanoyl-[acyl-carrier-protein] and UDP-N-acetyl-alpha-D-glucosamine: step 2/6. In terms of biological role, catalyzes the hydrolysis of UDP-3-O-myristoyl-N-acetylglucosamine to form UDP-3-O-myristoylglucosamine and acetate, the committed step in lipid A biosynthesis. This chain is UDP-3-O-acyl-N-acetylglucosamine deacetylase, found in Aquifex aeolicus (strain VF5).